The following is a 460-amino-acid chain: Ammonium transporter Rh type B (460 aa).

Residues 1–10 lie on the Cytoplasmic side of the membrane; it reads MTGYSTNMRI. Residues 11–31 traverse the membrane as a helical segment; that stretch reads KLPVFCLLLEFITIILFAVFV. The Extracellular portion of the chain corresponds to 32-62; it reads RYDHESDAKQWHDEMRNHSVQNAENDFYFRY. An N-linked (GlcNAc...) asparagine glycan is attached at Asn48. The chain crosses the membrane as a helical span at residues 63–83; it reads PSFQDVHVMIFIGFGFLMTFL. Residues 84-87 are Cytoplasmic-facing; it reads KRYG. The helical transmembrane segment at 88-108 threads the bilayer; that stretch reads FSSVAFNFLIAAFGLQWSTLI. Over 109 to 125 the chain is Extracellular; it reads QGFFHGFHDGKIHVGIE. A helical membrane pass occupies residues 126 to 146; sequence SMINADFCTGAVLISFGAVLG. Topologically, residues 147 to 150 are cytoplasmic; that stretch reads KTSP. A helical membrane pass occupies residues 151–171; sequence VQLIVMTLIEVTLFGINEYII. Topologically, residues 172–179 are extracellular; it reads LNIVGAKD. A helical membrane pass occupies residues 180–202; sequence AGGSMTIHTFGAYFGLIVSRVLY. Residues 203–220 lie on the Cytoplasmic side of the membrane; it reads RDDLEKSRQREGSVYHSD. Residues 221 to 241 form a helical membrane-spanning segment; it reads LFAMIGTIYLWMFWPSFNSAI. Over 242-252 the chain is Extracellular; that stretch reads TAHGDDQHRTV. The chain crosses the membrane as a helical span at residues 253–273; sequence MNTYYSLAACTLATFGFSALL. The Cytoplasmic segment spans residues 274-283; it reads NGEGKLDMVH. The chain crosses the membrane as a helical span at residues 284 to 304; it reads IQNAALAGGVAVGTSGEMMLT. Position 305 (Pro305) is a topological domain, extracellular. The chain crosses the membrane as a helical span at residues 306-326; sequence FGAMIAGTLAGMISVLGYKYL. At 327 to 347 the chain is on the cytoplasmic side; that stretch reads TPVLDSKLKIQDTCGVHNLHG. A helical transmembrane segment spans residues 348-368; sequence MPGILGALIGAIVALFATAEI. At 369-394 the chain is on the extracellular side; sequence YGAGMEDVFPLISDGSRTAKQQSLYQ. The helical transmembrane segment at 395–415 threads the bilayer; sequence FLALLVALGFAILGGLVVGFI. Residues 416–460 lie on the Cytoplasmic side of the membrane; sequence LKLPIFGTPSDAECFEDAVYWEVPGGEGHQQLTVVINNEDPDTQA.

Belongs to the ammonium transporter (TC 2.A.49) family. Rh subfamily.

It localises to the basolateral cell membrane. The protein localises to the cytoplasmic vesicle membrane. In terms of biological role, functions as a specific ammonium transporter. The sequence is that of Ammonium transporter Rh type B (rhbg) from Xenopus tropicalis (Western clawed frog).